A 147-amino-acid polypeptide reads, in one-letter code: Hemoglobin subunit epsilon (147 aa).

One can recognise a Globin domain in the interval 3 to 147; sequence HWSAEEKQLI…VAHALPRKYH (145 aa). Residues His64 and His93 each coordinate heme b.

It belongs to the globin family. Heterotetramer of two epsilon chains and two alpha chains. As to expression, red blood cells.

In terms of biological role, beta-type chain found in early embryos. In Cairina moschata (Muscovy duck), this protein is Hemoglobin subunit epsilon (HBE).